Here is a 392-residue protein sequence, read N- to C-terminus: Succinyl-diaminopimelate desuccinylase (392 aa).

Zn(2+) is bound at residue histidine 77. Aspartate 79 is an active-site residue. Aspartate 110 serves as a coordination point for Zn(2+). Glutamate 144 functions as the Proton acceptor in the catalytic mechanism. Positions 145, 173, and 359 each coordinate Zn(2+).

Belongs to the peptidase M20A family. DapE subfamily. Homodimer. Zn(2+) is required as a cofactor. It depends on Co(2+) as a cofactor.

The catalysed reaction is N-succinyl-(2S,6S)-2,6-diaminopimelate + H2O = (2S,6S)-2,6-diaminopimelate + succinate. It participates in amino-acid biosynthesis; L-lysine biosynthesis via DAP pathway; LL-2,6-diaminopimelate from (S)-tetrahydrodipicolinate (succinylase route): step 3/3. Functionally, catalyzes the hydrolysis of N-succinyl-L,L-diaminopimelic acid (SDAP), forming succinate and LL-2,6-diaminopimelate (DAP), an intermediate involved in the bacterial biosynthesis of lysine and meso-diaminopimelic acid, an essential component of bacterial cell walls. The sequence is that of Succinyl-diaminopimelate desuccinylase from Thiobacillus denitrificans (strain ATCC 25259 / T1).